Reading from the N-terminus, the 822-residue chain is Molybdenum cofactor sulfurase (822 aa).

Lys-239 is subject to N6-(pyridoxal phosphate)lysine. The active site involves Cys-401. The segment at Thr-633 to Pro-666 is disordered. In terms of domain architecture, MOSC spans Arg-643–Gln-820.

It belongs to the class-V pyridoxal-phosphate-dependent aminotransferase family. MOCOS subfamily. It depends on pyridoxal 5'-phosphate as a cofactor.

The enzyme catalyses Mo-molybdopterin + L-cysteine + AH2 = thio-Mo-molybdopterin + L-alanine + A + H2O. It functions in the pathway cofactor biosynthesis; molybdopterin biosynthesis. In terms of biological role, sulfurates the molybdenum cofactor. Sulfation of molybdenum is essential for xanthine dehydrogenase (XDH) and aldehyde oxidase (ADO) enzymes in which molybdenum cofactor is liganded by 1 oxygen and 1 sulfur atom in active form. The chain is Molybdenum cofactor sulfurase from Aspergillus oryzae (strain ATCC 42149 / RIB 40) (Yellow koji mold).